Reading from the N-terminus, the 554-residue chain is CTP synthase (554 aa).

An amidoligase domain region spans residues 1–265; sequence MTPLIFVTGG…DEIVVNQLKL (265 aa). A CTP-binding site is contributed by S13. S13 is a UTP binding site. Residues 14 to 19 and D71 each bind ATP; that span reads SLGKGI. Mg(2+) is bound by residues D71 and E139. CTP contacts are provided by residues 146–148, 186–191, and K222; these read DIE and KTKPTQ. UTP-binding positions include 186–191 and K222; that span reads KTKPTQ. A Glutamine amidotransferase type-1 domain is found at 292–545; that stretch reads TIAVVGKYVD…IRAARERKAG (254 aa). Residue G353 coordinates L-glutamine. C380 functions as the Nucleophile; for glutamine hydrolysis in the catalytic mechanism. L-glutamine is bound by residues 381-384, E404, and R471; that span reads YGMQ. Catalysis depends on residues H518 and E520.

Belongs to the CTP synthase family. As to quaternary structure, homotetramer.

The catalysed reaction is UTP + L-glutamine + ATP + H2O = CTP + L-glutamate + ADP + phosphate + 2 H(+). It catalyses the reaction L-glutamine + H2O = L-glutamate + NH4(+). The enzyme catalyses UTP + NH4(+) + ATP = CTP + ADP + phosphate + 2 H(+). The protein operates within pyrimidine metabolism; CTP biosynthesis via de novo pathway; CTP from UDP: step 2/2. With respect to regulation, allosterically activated by GTP, when glutamine is the substrate; GTP has no effect on the reaction when ammonia is the substrate. The allosteric effector GTP functions by stabilizing the protein conformation that binds the tetrahedral intermediate(s) formed during glutamine hydrolysis. Inhibited by the product CTP, via allosteric rather than competitive inhibition. Its function is as follows. Catalyzes the ATP-dependent amination of UTP to CTP with either L-glutamine or ammonia as the source of nitrogen. Regulates intracellular CTP levels through interactions with the four ribonucleotide triphosphates. The chain is CTP synthase from Stenotrophomonas maltophilia (strain R551-3).